Here is a 161-residue protein sequence, read N- to C-terminus: DNA-directed RNA polymerase 18 kDa subunit (161 aa).

It belongs to the poxviridae DNA-directed RNA polymerase 18 kDa subunit family. As to quaternary structure, the DNA-dependent RNA polymerase used for intermediate and late genes expression consists of eight subunits Rpo30/OPG66, Rpo7/OPG90, Rpo22/OPG103, Rpo147/OPG105, Rpo18/OPG119, Rpo19/OPG131, Rpo132/OPG151 and Rpo35/OPG156. The same holoenzyme, with the addition of the transcription-specificity factor OPG109, is used for early gene expression. Apparently non-glycosylated.

It localises to the virion. It carries out the reaction RNA(n) + a ribonucleoside 5'-triphosphate = RNA(n+1) + diphosphate. Functionally, part of the DNA-dependent RNA polymerase which catalyzes the transcription of viral DNA into RNA using the four ribonucleoside triphosphates as substrates. Responsible for the transcription of early, intermediate and late genes. DNA-dependent RNA polymerase associates with the early transcription factor (ETF), itself composed of OPG118 and OPG133, thereby allowing the early genes transcription. Late transcription, and probably also intermediate transcription, require newly synthesized RNA polymerase. The protein is DNA-directed RNA polymerase 18 kDa subunit (OPG119) of Cynomys gunnisoni (Gunnison's prairie dog).